The following is a 425-amino-acid chain: Non-structural protein 2 (425 aa).

A coiled-coil region spans residues valine 29–threonine 64.

This Banna virus (BAV) protein is Non-structural protein 2 (Segment-6).